The primary structure comprises 134 residues: Large ribosomal subunit protein uL16c (134 aa).

The protein belongs to the universal ribosomal protein uL16 family. In terms of assembly, part of the 50S ribosomal subunit.

It localises to the plastid. Its subcellular location is the chloroplast. This is Large ribosomal subunit protein uL16c from Atropa belladonna (Belladonna).